A 231-amino-acid chain; its full sequence is L-ribulose-5-phosphate 4-epimerase AraD (231 aa).

Substrate contacts are provided by residues 27–28 (GN), 44–45 (SG), and 74–75 (SS). Zn(2+)-binding residues include aspartate 76, histidine 95, and histidine 97. Residue aspartate 120 is the Proton donor/acceptor of the active site. Zn(2+) is bound at residue histidine 171. Tyrosine 229 acts as the Proton donor/acceptor in catalysis.

Belongs to the aldolase class II family. AraD/FucA subfamily. In terms of assembly, homotetramer. It depends on Zn(2+) as a cofactor.

It catalyses the reaction L-ribulose 5-phosphate = D-xylulose 5-phosphate. It participates in carbohydrate degradation; L-arabinose degradation via L-ribulose; D-xylulose 5-phosphate from L-arabinose (bacterial route): step 3/3. With respect to regulation, inhibited by glycolohydroxamate at concentration above 0.1 mM. Functionally, involved in the degradation of L-arabinose. Catalyzes the interconversion of L-ribulose 5-phosphate (LRu5P) and D-xylulose 5-phosphate (D-Xu5P) via a retroaldol/aldol mechanism (carbon-carbon bond cleavage analogous to a class II aldolase reaction). The polypeptide is L-ribulose-5-phosphate 4-epimerase AraD (Escherichia coli (strain K12)).